Here is a 101-residue protein sequence, read N- to C-terminus: NAD(P)H-quinone oxidoreductase subunit 4L, chloroplastic (101 aa).

Transmembrane regions (helical) follow at residues 2-22 (MLEHVLFLSAYLFSIGIFGLI), 32-52 (MCLELILNAVNLNLVTFSHLF), and 61-81 (IFSIFVITIAAAEAAIGLAIV).

This sequence belongs to the complex I subunit 4L family. NDH is composed of at least 16 different subunits, 5 of which are encoded in the nucleus.

It localises to the plastid. Its subcellular location is the chloroplast thylakoid membrane. The enzyme catalyses a plastoquinone + NADH + (n+1) H(+)(in) = a plastoquinol + NAD(+) + n H(+)(out). It catalyses the reaction a plastoquinone + NADPH + (n+1) H(+)(in) = a plastoquinol + NADP(+) + n H(+)(out). Functionally, NDH shuttles electrons from NAD(P)H:plastoquinone, via FMN and iron-sulfur (Fe-S) centers, to quinones in the photosynthetic chain and possibly in a chloroplast respiratory chain. The immediate electron acceptor for the enzyme in this species is believed to be plastoquinone. Couples the redox reaction to proton translocation, and thus conserves the redox energy in a proton gradient. This is NAD(P)H-quinone oxidoreductase subunit 4L, chloroplastic from Piper cenocladum (Ant piper).